A 264-amino-acid chain; its full sequence is Neurexophilin-2 (264 aa).

The N-terminal stretch at Met-1–Ser-22 is a signal peptide. The II stretch occupies residues Glu-23–Val-90. Asn-86, Asn-139, Asn-149, and Asn-155 each carry an N-linked (GlcNAc...) asparagine glycan. Positions Gln-91–Phe-169 are III. The segment at Glu-170 to Glu-178 is IV (linker domain). A v (Cys-rich) region spans residues Thr-179–Gly-264.

This sequence belongs to the neurexophilin family. Post-translationally, may be proteolytically processed at the boundary between the N-terminal non-conserved and the central conserved domain in neuron-like cells. Brain, only in a scattered subpopulation of neurons that probably represent inhibitory interneurons.

The protein resides in the secreted. In terms of biological role, may be signaling molecules that resemble neuropeptides and that act by binding to alpha-neurexins and possibly other receptors. The sequence is that of Neurexophilin-2 (NXPH2) from Bos taurus (Bovine).